The following is a 438-amino-acid chain: Enolase (438 aa).

Glutamine 174 lines the (2R)-2-phosphoglycerate pocket. Glutamate 216 serves as the catalytic Proton donor. The Mg(2+) site is built by aspartate 253, glutamate 297, and aspartate 324. (2R)-2-phosphoglycerate is bound by residues lysine 349, arginine 378, serine 379, and lysine 400. The active-site Proton acceptor is the lysine 349.

The protein belongs to the enolase family. Component of the RNA degradosome, a multiprotein complex involved in RNA processing and mRNA degradation. Mg(2+) serves as cofactor.

It localises to the cytoplasm. The protein resides in the secreted. It is found in the cell surface. The catalysed reaction is (2R)-2-phosphoglycerate = phosphoenolpyruvate + H2O. It participates in carbohydrate degradation; glycolysis; pyruvate from D-glyceraldehyde 3-phosphate: step 4/5. Catalyzes the reversible conversion of 2-phosphoglycerate (2-PG) into phosphoenolpyruvate (PEP). It is essential for the degradation of carbohydrates via glycolysis. This chain is Enolase, found in Psychrobacter arcticus (strain DSM 17307 / VKM B-2377 / 273-4).